The primary structure comprises 495 residues: Aspartyl/glutamyl-tRNA(Asn/Gln) amidotransferase subunit B (495 aa).

The protein belongs to the GatB/GatE family. GatB subfamily. As to quaternary structure, heterotrimer of A, B and C subunits.

The enzyme catalyses L-glutamyl-tRNA(Gln) + L-glutamine + ATP + H2O = L-glutaminyl-tRNA(Gln) + L-glutamate + ADP + phosphate + H(+). The catalysed reaction is L-aspartyl-tRNA(Asn) + L-glutamine + ATP + H2O = L-asparaginyl-tRNA(Asn) + L-glutamate + ADP + phosphate + 2 H(+). Its function is as follows. Allows the formation of correctly charged Asn-tRNA(Asn) or Gln-tRNA(Gln) through the transamidation of misacylated Asp-tRNA(Asn) or Glu-tRNA(Gln) in organisms which lack either or both of asparaginyl-tRNA or glutaminyl-tRNA synthetases. The reaction takes place in the presence of glutamine and ATP through an activated phospho-Asp-tRNA(Asn) or phospho-Glu-tRNA(Gln). The protein is Aspartyl/glutamyl-tRNA(Asn/Gln) amidotransferase subunit B of Crocosphaera subtropica (strain ATCC 51142 / BH68) (Cyanothece sp. (strain ATCC 51142)).